We begin with the raw amino-acid sequence, 366 residues long: Phospho-N-acetylmuramoyl-pentapeptide-transferase (366 aa).

The next 10 helical transmembrane spans lie at 27 to 47 (AALF…IASL), 71 to 91 (TPTM…LLWA), 93 to 113 (LSSI…AIGF), 138 to 158 (FVIA…AGAA), 174 to 194 (LMLN…VGAG), 205 to 225 (GLAI…AYLA), 245 to 265 (LAVI…FNAP), 268 to 288 (AIFM…TVAV), 297 to 317 (IIIG…VFWF), and 343 to 363 (QVVI…LSTL).

Belongs to the glycosyltransferase 4 family. MraY subfamily. The cofactor is Mg(2+).

The protein localises to the cell inner membrane. The enzyme catalyses UDP-N-acetyl-alpha-D-muramoyl-L-alanyl-gamma-D-glutamyl-meso-2,6-diaminopimeloyl-D-alanyl-D-alanine + di-trans,octa-cis-undecaprenyl phosphate = di-trans,octa-cis-undecaprenyl diphospho-N-acetyl-alpha-D-muramoyl-L-alanyl-D-glutamyl-meso-2,6-diaminopimeloyl-D-alanyl-D-alanine + UMP. The protein operates within cell wall biogenesis; peptidoglycan biosynthesis. In terms of biological role, catalyzes the initial step of the lipid cycle reactions in the biosynthesis of the cell wall peptidoglycan: transfers peptidoglycan precursor phospho-MurNAc-pentapeptide from UDP-MurNAc-pentapeptide onto the lipid carrier undecaprenyl phosphate, yielding undecaprenyl-pyrophosphoryl-MurNAc-pentapeptide, known as lipid I. This chain is Phospho-N-acetylmuramoyl-pentapeptide-transferase, found in Rhizobium meliloti (strain 1021) (Ensifer meliloti).